A 110-amino-acid chain; its full sequence is Protein E7 (110 aa).

Positions 1-47 are E7 terminal domain; it reads MHGPKPTVQEIVLELCPCNEIEPVDLVCHEQLGDSDDEIDEPDHAVN. Positions 26 to 30 match the LXCXE motif; interaction with host RB1 and TMEM173/STING motif; it reads LVCHE. A zinc finger spans residues 69–105; that stretch reads CCKCNNLLQLVVEASRENLRNVELLFMDSLNFVCPWC. The short motif at 87–95 is the Nuclear export signal element; sequence LRNVELLFM.

Belongs to the papillomaviridae E7 protein family. In terms of assembly, homodimer. Homooligomer. Interacts with host RB1; this interaction induces dissociation of RB1-E2F1 complex thereby disrupting RB1 activity. Interacts with host EP300; this interaction represses EP300 transcriptional activity. Interacts with protein E2; this interaction inhibits E7 oncogenic activity. Interacts with host TMEM173/STING; this interaction impairs the ability of TMEM173/STING to sense cytosolic DNA and promote the production of type I interferon (IFN-alpha and IFN-beta). Highly phosphorylated.

Its subcellular location is the host cytoplasm. The protein resides in the host nucleus. Its function is as follows. Plays a role in viral genome replication by driving entry of quiescent cells into the cell cycle. Stimulation of progression from G1 to S phase allows the virus to efficiently use the cellular DNA replicating machinery to achieve viral genome replication. E7 protein has both transforming and trans-activating activities. Induces the disassembly of the E2F1 transcription factor from RB1, with subsequent transcriptional activation of E2F1-regulated S-phase genes. Interferes with host histone deacetylation mediated by HDAC1 and HDAC2, leading to transcription activation. Also plays a role in the inhibition of both antiviral and antiproliferative functions of host interferon alpha. Interaction with host TMEM173/STING impairs the ability of TMEM173/STING to sense cytosolic DNA and promote the production of type I interferon (IFN-alpha and IFN-beta). In Human papillomavirus type ME180, this protein is Protein E7.